A 354-amino-acid polypeptide reads, in one-letter code: Caffeate O-methyltransferase-like protein 2 (354 aa).

Residues Gly-198, Asp-221, Met-242, and Lys-255 each contribute to the S-adenosyl-L-homocysteine site. The active-site Proton acceptor is the His-259. Residues Glu-287 and Glu-319 contribute to the active site.

This sequence belongs to the class I-like SAM-binding methyltransferase superfamily. Cation-independent O-methyltransferase family. COMT subfamily.

The protein is Caffeate O-methyltransferase-like protein 2 of Oryza sativa subsp. japonica (Rice).